The primary structure comprises 536 residues: Glucose-6-phosphate isomerase (536 aa).

Glutamate 345 serves as the catalytic Proton donor. Active-site residues include histidine 376 and lysine 505.

The protein belongs to the GPI family.

The protein resides in the cytoplasm. It carries out the reaction alpha-D-glucose 6-phosphate = beta-D-fructose 6-phosphate. It functions in the pathway carbohydrate biosynthesis; gluconeogenesis. The protein operates within carbohydrate degradation; glycolysis; D-glyceraldehyde 3-phosphate and glycerone phosphate from D-glucose: step 2/4. Catalyzes the reversible isomerization of glucose-6-phosphate to fructose-6-phosphate. This chain is Glucose-6-phosphate isomerase, found in Ruegeria sp. (strain TM1040) (Silicibacter sp.).